The sequence spans 265 residues: uncharacterized protein (265 aa).

2 consecutive CBS domains span residues 9 to 64 and 67 to 126; these read MTKK…EKVE and MTKR…TTPK.

This is an uncharacterized protein from Methanocaldococcus jannaschii (strain ATCC 43067 / DSM 2661 / JAL-1 / JCM 10045 / NBRC 100440) (Methanococcus jannaschii).